We begin with the raw amino-acid sequence, 40 residues long: Muscarinic m1-toxin3 (40 aa).

Cysteine 3 and cysteine 24 are joined by a disulfide.

It belongs to the three-finger toxin family. Short-chain subfamily. Aminergic toxin sub-subfamily. In terms of assembly, monomer. Contains 4 disulfide bonds. Expressed by the venom gland.

Its subcellular location is the secreted. Its function is as follows. Binds irreversibly and specifically to M1 (CHRM1) muscarinic acetylcholine receptors, blocking further binding of antagonists and preventing the action of agonists. The polypeptide is Muscarinic m1-toxin3 (Dendroaspis angusticeps (Eastern green mamba)).